The primary structure comprises 189 residues: uncharacterized protein (189 aa).

Belongs to the mimivirus R457/R459 family.

Its subcellular location is the virion. This is an uncharacterized protein from Acanthamoeba polyphaga mimivirus (APMV).